We begin with the raw amino-acid sequence, 330 residues long: Zinc finger protein sdz-12 (330 aa).

5 consecutive C2H2-type zinc fingers follow at residues 27 to 48 (PQCQ…HMKH), 63 to 85 (FRCE…QITH), 91 to 113 (KKCS…LHNH), 120 to 144 (FDCP…LVNH), and 153 to 176 (APCG…HFDH). The segment covering 183-195 (SAPAPTSSARLSP) has biased composition (low complexity). Residues 183-203 (SAPAPTSSARLSPITVSTSGS) are disordered. The C2H2-type 6 zinc-finger motif lies at 271-293 (FECKHCTIKFHDATMSIMHNALH).

This sequence belongs to the krueppel C2H2-type zinc-finger protein family. Expressed in the somatic gonad.

In terms of biological role, together with ehn-3, may play a role in gonadogenesis. This chain is Zinc finger protein sdz-12, found in Caenorhabditis elegans.